We begin with the raw amino-acid sequence, 180 residues long: Urease accessory protein UreE (180 aa).

Residues 71–90 are disordered; that stretch reads AAPSGAGHGDGEQDGTGAPG.

This sequence belongs to the UreE family.

The protein localises to the cytoplasm. Involved in urease metallocenter assembly. Binds nickel. Probably functions as a nickel donor during metallocenter assembly. This chain is Urease accessory protein UreE, found in Kocuria rhizophila (strain ATCC 9341 / DSM 348 / NBRC 103217 / DC2201).